The sequence spans 59 residues: Potassium channel toxin alpha-KTx 16.4 (59 aa).

Positions 1-22 are cleaved as a signal peptide; the sequence is MKILSIVLIALIICSISICTEA. 3 disulfide bridges follow: cysteine 30/cysteine 51, cysteine 36/cysteine 56, and cysteine 40/cysteine 58.

This sequence belongs to the short scorpion toxin superfamily. Potassium channel inhibitor family. Alpha-KTx 16 subfamily. In terms of tissue distribution, expressed by the venom gland.

The protein resides in the secreted. Its function is as follows. Weak inhibitor of voltage-gated potassium channel hKv1.3/KCNA3. In Mesobuthus eupeus (Lesser Asian scorpion), this protein is Potassium channel toxin alpha-KTx 16.4.